The sequence spans 229 residues: PKHD-type hydroxylase Rpal_3968 (229 aa).

Residues 78–180 (QIFPPLFNRY…RVASFFWLQS (103 aa)) form the Fe2OG dioxygenase domain. Fe cation is bound by residues His-98, Asp-100, and His-161. Residue Arg-171 coordinates 2-oxoglutarate.

Fe(2+) is required as a cofactor. The cofactor is L-ascorbate.

In Rhodopseudomonas palustris (strain TIE-1), this protein is PKHD-type hydroxylase Rpal_3968.